Consider the following 506-residue polypeptide: MAEFKRYLELDISQQHDFIYPLIFQEYIYALAHDRGLNRSIFLENAGYDNKSSLLIVKRLITHLITQMYQQNHFFFSVSDSNQKKNLGYNTNFYSQMIFEGFAVVMEIPFYLRLLSFLEGKERVKSHNLRSIHSIFPFLEDKFTYQNYVLDIQIPHPIHPEILVQTLRYWVKDASSLHLLRFFLHEYPIWNSLITQKKSIFYFSKKNQRFFLFLYNFHVCEYESIFVFLRNQSSYLRSISSETFLERISFYRKIEREVFTKDFKAILWLFKEPFLHYVRYRGKAILASKGTSLLMNKWKYYLLNFWQSYFYMWSQPRRIHINQLSNHSLDFLGYLSSVRLKPLMLRSQMIENSFLIENASKKFDTLMPITTMILSLYKAKFCNVVGHPMSKPAWAALSDSDIIERFRALYRNLSHYYSGSLKKISLYRIKYILRLSCARTLARKHKSTVRAFLKRLGVGLLEEFFTEEEQVFYLTFQKVSFTSGELYRRRIWYLDIICINDLANYE.

The protein belongs to the intron maturase 2 family. MatK subfamily.

Its subcellular location is the plastid. It localises to the chloroplast. In terms of biological role, usually encoded in the trnK tRNA gene intron. Probably assists in splicing its own and other chloroplast group II introns. The chain is Maturase K from Phyllodoce empetriformis (Pink mountainheath).